The chain runs to 507 residues: MRLNPGEIVRVLETKISDYKEEIRLEDTGKVIQVGDGIARVYGLNNVMANEMVEFVETGTKGLAFNLEEDNVGIIILGDYKDIKEGHTVRRLNRIMEVPVGEGLLGRVVNPLGEPLDGLGPVEYKETRPIEFKAPGVIFRKPVDTPLQTGLKVVDSLIPIGRGQRELIIGDRQTGKTAIAIDTIINQKGKGVYCIYVAIGQKASAVARIVEKLRQTGAMEYTTVVVAASSDPATLQYIAPYAGCAMGEYFMFNGKDALVVYDDLSKHAVAYRQISLLLRRPPGREAYPGDVFYLHSRLLERAARLNEKYGGGSLTALPIIETQANDISAYIPTNVISITDGQIYLEPGLFYAGQRPAVNIGLSVSRVGGAAQIKAMKQVAGSLKLDLAQFQELETFAQFATELDPATQAQITRGQRLMELMKQPQYSPMEVEDQVVVLFAGINGYLDDLPINAVKAFEEGLLKFVKEKYSSLLDEIRTTKQLSKENETKLHAVIKEFKEEFVKLYGK.

Position 170 to 177 (170 to 177 (GDRQTGKT)) interacts with ATP.

The protein belongs to the ATPase alpha/beta chains family. In terms of assembly, F-type ATPases have 2 components, CF(1) - the catalytic core - and CF(0) - the membrane proton channel. CF(1) has five subunits: alpha(3), beta(3), gamma(1), delta(1), epsilon(1). CF(0) has three main subunits: a(1), b(2) and c(9-12). The alpha and beta chains form an alternating ring which encloses part of the gamma chain. CF(1) is attached to CF(0) by a central stalk formed by the gamma and epsilon chains, while a peripheral stalk is formed by the delta and b chains.

Its subcellular location is the cell inner membrane. The catalysed reaction is ATP + H2O + 4 H(+)(in) = ADP + phosphate + 5 H(+)(out). Functionally, produces ATP from ADP in the presence of a proton gradient across the membrane. The alpha chain is a regulatory subunit. This chain is ATP synthase subunit alpha, found in Fervidobacterium nodosum (strain ATCC 35602 / DSM 5306 / Rt17-B1).